The primary structure comprises 347 residues: Dolichyl-diphosphooligosaccharide--protein glycosyltransferase subunit TUSC3 (347 aa).

Residues 1-41 form the signal peptide; that stretch reads MGARGAPSRRRQAGRRPRYLPTGSFPFLLLLLLLCIQLGGG. The Lumenal portion of the chain corresponds to 42–196; that stretch reads QKKKENLLAE…DVHIRVFRPP (155 aa). Residues 59–187 form the Thioredoxin domain; that stretch reads WSSRRSVFRM…LAKWIADRTD (129 aa). N-linked (GlcNAc...) asparagine glycosylation occurs at asparagine 83. Cysteine 99 and cysteine 102 are disulfide-bonded. Residues 197–217 traverse the membrane as a helical segment; sequence NYSGTIALALLVSLVGGLLYL. Topologically, residues 218–221 are cytoplasmic; sequence RRNN. A helical transmembrane segment spans residues 222–242; sequence LEFIYNKTGWAMVSLCIVFAM. Residues 243 to 276 lie on the Lumenal side of the membrane; sequence TSGQMWNHIRGPPYAHKNPHNGQVSYIHGSSQVQ. The helical transmembrane segment at 277–297 threads the bilayer; the sequence is FVAESHIILVLNAAITMGMDL. Residues 298 to 312 lie on the Cytoplasmic side of the membrane; it reads LNEAATSKGDVGKRR. The helical transmembrane segment at 313–333 threads the bilayer; it reads IICLVGLGLVVFFFSFLLSIF. At 334–347 the chain is on the lumenal side; that stretch reads RSKYHGYPYSFLIK.

The protein belongs to the OST3/OST6 family. As to quaternary structure, accessory component of the STT3B-containing form of the oligosaccharyltransferase (OST) complex. OST exists in two different complex forms which contain common core subunits RPN1, RPN2, OST48, OST4, DAD1 and TMEM258, either STT3A or STT3B as catalytic subunits, and form-specific accessory subunits. OST can form stable complexes with the Sec61 complex or with both the Sec61 and TRAP complexes. The association of TUSC3 or MAGT1 with the STT3B-containing complex seems to be mutually exclusvice.

Its subcellular location is the endoplasmic reticulum membrane. It functions in the pathway protein modification; protein glycosylation. Functionally, acts as accessory component of the N-oligosaccharyl transferase (OST) complex which catalyzes the transfer of a high mannose oligosaccharide from a lipid-linked oligosaccharide donor to an asparagine residue within an Asn-X-Ser/Thr consensus motif in nascent polypeptide chains. Involved in N-glycosylation of STT3B-dependent substrates. Specifically required for the glycosylation of a subset of acceptor sites that are near cysteine residues; in this function seems to act redundantly with MAGT1. In its oxidized form proposed to form transient mixed disulfides with a glycoprotein substrate to facilitate access of STT3B to the unmodified acceptor site. Also has oxidoreductase-independent functions in the STT3B-containing OST complex possibly involving substrate recognition. Could indirectly play a role in Mg(2+) transport. The sequence is that of Dolichyl-diphosphooligosaccharide--protein glycosyltransferase subunit TUSC3 (TUSC3) from Bos taurus (Bovine).